Here is a 272-residue protein sequence, read N- to C-terminus: 2-succinyl-6-hydroxy-2,4-cyclohexadiene-1-carboxylate synthase (272 aa).

It belongs to the AB hydrolase superfamily. MenH family. In terms of assembly, monomer.

The enzyme catalyses 5-enolpyruvoyl-6-hydroxy-2-succinyl-cyclohex-3-ene-1-carboxylate = (1R,6R)-6-hydroxy-2-succinyl-cyclohexa-2,4-diene-1-carboxylate + pyruvate. It functions in the pathway quinol/quinone metabolism; 1,4-dihydroxy-2-naphthoate biosynthesis; 1,4-dihydroxy-2-naphthoate from chorismate: step 3/7. It participates in quinol/quinone metabolism; menaquinone biosynthesis. In terms of biological role, catalyzes a proton abstraction reaction that results in 2,5-elimination of pyruvate from 2-succinyl-5-enolpyruvyl-6-hydroxy-3-cyclohexene-1-carboxylate (SEPHCHC) and the formation of 2-succinyl-6-hydroxy-2,4-cyclohexadiene-1-carboxylate (SHCHC). The protein is 2-succinyl-6-hydroxy-2,4-cyclohexadiene-1-carboxylate synthase of Yersinia pseudotuberculosis serotype I (strain IP32953).